Reading from the N-terminus, the 233-residue chain is DNA repair protein RecO (233 aa).

This sequence belongs to the RecO family.

Functionally, involved in DNA repair and RecF pathway recombination. The polypeptide is DNA repair protein RecO (Pseudomonas paraeruginosa (strain DSM 24068 / PA7) (Pseudomonas aeruginosa (strain PA7))).